We begin with the raw amino-acid sequence, 349 residues long: Ferredoxin--NADP reductase 1 (349 aa).

FAD-binding residues include Glu-36, Lys-44, Tyr-48, Ile-88, Leu-123, Asp-290, and Ser-331.

It belongs to the ferredoxin--NADP reductase type 2 family. As to quaternary structure, homodimer. FAD is required as a cofactor.

The enzyme catalyses 2 reduced [2Fe-2S]-[ferredoxin] + NADP(+) + H(+) = 2 oxidized [2Fe-2S]-[ferredoxin] + NADPH. The polypeptide is Ferredoxin--NADP reductase 1 (Bacillus mycoides (strain KBAB4) (Bacillus weihenstephanensis)).